A 196-amino-acid chain; its full sequence is Large ribosomal subunit protein uL14my (196 aa).

A mitochondrion-targeting transit peptide spans 1–62; it reads MATALASKLS…TILKCVDNSC (62 aa). The segment at 148-175 is disordered; that stretch reads EKKGQNNSHGSKRKMEYNQPTGTRVFGP.

This sequence belongs to the universal ribosomal protein uL14 family. Part of the mitochondrial 50S ribosomal subunit. As to expression, mostly expressed in pistils and inflorescences, including floral organs and meristems, and, to a lower extent, in leaves.

The protein localises to the mitochondrion. Binds to 23S rRNA in mitochondrion. Required for the formation of the proximal region of the ovule primordium during floral organogenesis, thus participating in patterning and growth of ovule. Also regulates the initiation and/or maintenance of integument and embryo sac ontogenesis. Prevents inappropriate cell death in the young ovule. In Arabidopsis thaliana (Mouse-ear cress), this protein is Large ribosomal subunit protein uL14my (HLL).